The following is a 469-amino-acid chain: Cold shock protein CS66 (469 aa).

A run of 21 repeats spans residues 9 to 31 (GEKK…DHKE), 49 to 62 (TGGA…TGTT), 72 to 94 (GEKK…DHQQ), 95 to 108 (TGGT…TGTA), 115 to 128 (TGGT…TGTA), 135 to 148 (TNGT…TGTA), 149 to 162 (TGGS…TGVT), 170 to 192 (GEKK…DNQQ), 193 to 206 (TAGT…FATG), 213 to 226 (TGGT…AGVT), 234 to 256 (GEKK…DHQQ), 257 to 270 (TGGT…TGAA), 277 to 290 (GGGT…TGMT), 298 to 320 (GGKK…DNQQ), 321 to 334 (TGGA…TGAA), 341 to 354 (SGGT…TGMT), 362 to 384 (GEKK…DHQQ), 385 to 398 (TGGA…TGTA), 405 to 418 (GGGT…TGMT), 428 to 441 (TGGT…TGTT), and 452 to 469 (GEKK…PGQH). The tract at residues 9–390 (GEKKGIMEKI…DHQQTGGAYG (382 aa)) is 7 X 23 AA approximate repeats. Residues 49–441 (TGGAYGQEGH…HGQHGHTGTT (393 aa)) are 14 X 14 AA approximate repeats. Positions 87–112 (GGHADHQQTGGTYGQQGHTGTATHGT) are disordered. Residues 93–112 (QQTGGTYGQQGHTGTATHGT) show a composition bias toward low complexity. Over residues 203-214 (FATGTHGTPATG) the composition is skewed to low complexity. The disordered stretch occupies residues 203–469 (FATGTHGTPA…KIKDKLPGQH (267 aa)). The span at 233-254 (TGEKKGLMENIKDKLPGGHGDH) shows a compositional bias: basic and acidic residues. The span at 255-274 (QQTGGTYGQQGHTGAATHGT) shows a compositional bias: low complexity. The segment covering 288–301 (GMTGTGTHGTGGKK) has biased composition (gly residues). Basic and acidic residues predominate over residues 302–312 (GVMENIKDKLP). A compositionally biased stretch (basic and acidic residues) spans 361–382 (TGEKKAVMENIKDKLPGGHGDH). Low complexity-rich tracts occupy residues 383-402 (QQTG…THGT) and 412-429 (HGNT…TATG). Residues 439–450 (GTTGTGTHGTDG) show a composition bias toward gly residues. Residues 451-469 (VGEKKSLMDKIKDKLPGQH) show a composition bias toward basic and acidic residues.

This sequence belongs to the plant dehydrin family.

Its function is as follows. May reduce intracellular freezing damage during winter by hydrogen-bonding to the lattice of the nascent ice crystals, thus modifying the structure and/or propagation of ice crystals. The polypeptide is Cold shock protein CS66 (CS66) (Triticum aestivum (Wheat)).